The primary structure comprises 96 residues: Co-chaperonin GroES (96 aa).

The protein belongs to the GroES chaperonin family. In terms of assembly, heptamer of 7 subunits arranged in a ring. Interacts with the chaperonin GroEL.

Its subcellular location is the cytoplasm. Its function is as follows. Together with the chaperonin GroEL, plays an essential role in assisting protein folding. The GroEL-GroES system forms a nano-cage that allows encapsulation of the non-native substrate proteins and provides a physical environment optimized to promote and accelerate protein folding. GroES binds to the apical surface of the GroEL ring, thereby capping the opening of the GroEL channel. In Shewanella piezotolerans (strain WP3 / JCM 13877), this protein is Co-chaperonin GroES.